The chain runs to 295 residues: RNA polymerase sigma factor RpoH (295 aa).

Positions 52–121 are sigma-70 factor domain-2; the sequence is MVTSHLRLVA…IQEYILRSWS (70 aa). The short motif at 76-79 is the Interaction with polymerase core subunit RpoC element; that stretch reads EVIS. Residues 230 to 281 are sigma-70 factor domain-4; the sequence is AMVELTDRERHILTERRLKDDPTTLEELAAQYGVSRERVRQIEVRAFEKLQK. A DNA-binding region (H-T-H motif) is located at residues 254-273; it reads LEELAAQYGVSRERVRQIEV.

It belongs to the sigma-70 factor family. RpoH subfamily. In terms of assembly, interacts with the RNA polymerase core enzyme.

Its subcellular location is the cytoplasm. Functionally, sigma factors are initiation factors that promote the attachment of RNA polymerase to specific initiation sites and are then released. This sigma factor is involved in regulation of expression of heat shock genes. This chain is RNA polymerase sigma factor RpoH, found in Caulobacter vibrioides (strain ATCC 19089 / CIP 103742 / CB 15) (Caulobacter crescentus).